We begin with the raw amino-acid sequence, 358 residues long: Alanine racemase (358 aa).

K35 functions as the Proton acceptor; specific for D-alanine in the catalytic mechanism. At K35 the chain carries N6-(pyridoxal phosphate)lysine. Substrate is bound at residue R130. Y255 (proton acceptor; specific for L-alanine) is an active-site residue. Position 303 (M303) interacts with substrate.

The protein belongs to the alanine racemase family. Pyridoxal 5'-phosphate serves as cofactor.

The catalysed reaction is L-alanine = D-alanine. It participates in amino-acid biosynthesis; D-alanine biosynthesis; D-alanine from L-alanine: step 1/1. Catalyzes the interconversion of L-alanine and D-alanine. May also act on other amino acids. The protein is Alanine racemase (alr) of Shewanella piezotolerans (strain WP3 / JCM 13877).